The following is a 141-amino-acid chain: Hemoglobin subunit mu (141 aa).

A Globin domain is found at 1–141; sequence MLSAQERAQI…VAVVLTEKYR (141 aa). His-58 and His-87 together coordinate heme b.

Belongs to the globin family. Expressed in erythroid tissues.

The protein is Hemoglobin subunit mu (HBM) of Homo sapiens (Human).